Consider the following 513-residue polypeptide: MKAGCSIVEKPEGGGGYQFPDWAYKAESSPGSRQIQLWHFILELLQKEEFRHVIAWQQGEYGEFVIKDPDEVARLWGRRKCKPQMNYDKLSRALRYYYNKRILHKTKGKRFTYKFNFNKLVMPNYPFINIRSSGVVPQSAPPVPTASSRFHFPPLDSHSPTGDVQPGRFSASSLSASGPESGVTTDRKVEPSDLEDGSASDWHRGMDFMPSRNALGGGAVGHQKRKPDILLPLFTRPAMYPDPHSPFAISPVPGRGGVLNVPISPALSLTPTMFSYSPSPGLSPFTSSSCFSFNPEEMKHYLHSQACSVFNYHLSPRTFPRYPGLMVPPLQCQMHPEEPSQFSIKLQPPPAGRKNRERVESREEAVRGSVPASAPVPSRIKVEPATEKDPDSLRQSTQGKEEQTQEVDSMRSRTIEEGKGTGFAHPSPTWPSVSISTPSDEPLEGTEDSEDRSVREPGVPEKKEDALMPPKLRLKRRWNDDPEARELNKTGKFLWNGAGPQGLATTATAAADA.

The ETS DNA-binding region spans 35–116 (IQLWHFILEL…KGKRFTYKFN (82 aa)). A disordered region spans residues 138–202 (QSAPPVPTAS…DLEDGSASDW (65 aa)). Phosphoserine is present on residues serine 139, serine 159, and serine 315. The disordered stretch occupies residues 333–513 (QMHPEEPSQF…ATTATAAADA (181 aa)). 3 stretches are compositionally biased toward basic and acidic residues: residues 357–366 (ERVESREEAV), 380–392 (IKVE…DPDS), and 399–419 (GKEE…EEGK). Lysine 381 is covalently cross-linked (Glycyl lysine isopeptide (Lys-Gly) (interchain with G-Cter in SUMO2)). Position 388 is an N6-acetyllysine; alternate (lysine 388). Residue lysine 388 forms a Glycyl lysine isopeptide (Lys-Gly) (interchain with G-Cter in SUMO2); alternate linkage. Positions 430-439 (WPSVSISTPS) are enriched in polar residues. A compositionally biased stretch (acidic residues) spans 441-450 (EPLEGTEDSE). 2 stretches are compositionally biased toward basic and acidic residues: residues 451–466 (DRSV…KEDA) and 477–489 (RWND…ELNK). The span at 504 to 513 (ATTATAAADA) shows a compositional bias: low complexity.

Belongs to the ETS family.

It is found in the nucleus. Functionally, transcriptional repressor that contribute to growth arrest during terminal macrophage differentiation by repressing target genes involved in Ras-dependent proliferation. Represses MMP1 promoter activity. The protein is ETS translocation variant 3 (Etv3) of Mus musculus (Mouse).